A 507-amino-acid chain; its full sequence is ATP synthase subunit alpha (507 aa).

169–176 (GDRQTGKT) contributes to the ATP binding site.

The protein belongs to the ATPase alpha/beta chains family. In terms of assembly, F-type ATPases have 2 components, CF(1) - the catalytic core - and CF(0) - the membrane proton channel. CF(1) has five subunits: alpha(3), beta(3), gamma(1), delta(1), epsilon(1). CF(0) has three main subunits: a(1), b(2) and c(9-12). The alpha and beta chains form an alternating ring which encloses part of the gamma chain. CF(1) is attached to CF(0) by a central stalk formed by the gamma and epsilon chains, while a peripheral stalk is formed by the delta and b chains.

Its subcellular location is the cell inner membrane. It catalyses the reaction ATP + H2O + 4 H(+)(in) = ADP + phosphate + 5 H(+)(out). Its function is as follows. Produces ATP from ADP in the presence of a proton gradient across the membrane. The alpha chain is a regulatory subunit. The sequence is that of ATP synthase subunit alpha from Magnetococcus marinus (strain ATCC BAA-1437 / JCM 17883 / MC-1).